A 270-amino-acid polypeptide reads, in one-letter code: Cell division protein DivIB (270 aa).

At 1-38 (MTRRNNPELNDEREPIDKIKASIDLKKKTIRRNKRKRR) the chain is on the cytoplasmic side. A helical transmembrane segment spans residues 39-59 (LIKMLQFLIVIGVLIGIYYFD). Over 60 to 270 (KSDASRVHNV…QSAVVKACGS (211 aa)) the chain is Extracellular. Residues 64–135 (SRVHNVRVNG…INLNVTEKKA (72 aa)) enclose the POTRA domain.

The protein belongs to the FtsQ/DivIB family. DivIB subfamily.

Its subcellular location is the cell membrane. Its function is as follows. Cell division protein that may be involved in stabilizing or promoting the assembly of the division complex. In Erysipelothrix rhusiopathiae (strain Fujisawa), this protein is Cell division protein DivIB.